A 511-amino-acid chain; its full sequence is Bifunctional purine biosynthesis protein PurH (511 aa).

The MGS-like domain occupies 1 to 145 (MKKRALVSVS…KNHQFVSVIV (145 aa)).

Belongs to the PurH family.

The enzyme catalyses (6R)-10-formyltetrahydrofolate + 5-amino-1-(5-phospho-beta-D-ribosyl)imidazole-4-carboxamide = 5-formamido-1-(5-phospho-D-ribosyl)imidazole-4-carboxamide + (6S)-5,6,7,8-tetrahydrofolate. The catalysed reaction is IMP + H2O = 5-formamido-1-(5-phospho-D-ribosyl)imidazole-4-carboxamide. The protein operates within purine metabolism; IMP biosynthesis via de novo pathway; 5-formamido-1-(5-phospho-D-ribosyl)imidazole-4-carboxamide from 5-amino-1-(5-phospho-D-ribosyl)imidazole-4-carboxamide (10-formyl THF route): step 1/1. It functions in the pathway purine metabolism; IMP biosynthesis via de novo pathway; IMP from 5-formamido-1-(5-phospho-D-ribosyl)imidazole-4-carboxamide: step 1/1. The sequence is that of Bifunctional purine biosynthesis protein PurH from Bacillus cereus (strain G9842).